We begin with the raw amino-acid sequence, 524 residues long: Cytochrome P450 52A6 (524 aa).

Residues 17–34 traverse the membrane as a helical segment; that stretch reads WYTVITLAALVFLISSNI. C472 is a heme binding site.

It belongs to the cytochrome P450 family. The cofactor is heme.

The protein localises to the membrane. Functionally, together with an NADPH cytochrome P450 the enzyme system catalyzes the terminal hydroxylation as the first step in the assimilation of alkanes and fatty acids. Preferentially hydroxylates hexadecane. The polypeptide is Cytochrome P450 52A6 (CYP52A6) (Candida tropicalis (Yeast)).